The sequence spans 225 residues: Small ribosomal subunit protein uS2 (225 aa).

This sequence belongs to the universal ribosomal protein uS2 family.

The polypeptide is Small ribosomal subunit protein uS2 (Metallosphaera sedula (strain ATCC 51363 / DSM 5348 / JCM 9185 / NBRC 15509 / TH2)).